Here is a 383-residue protein sequence, read N- to C-terminus: ATP phosphoribosyltransferase regulatory subunit (383 aa).

It belongs to the class-II aminoacyl-tRNA synthetase family. HisZ subfamily. In terms of assembly, heteromultimer composed of HisG and HisZ subunits.

It is found in the cytoplasm. Its pathway is amino-acid biosynthesis; L-histidine biosynthesis; L-histidine from 5-phospho-alpha-D-ribose 1-diphosphate: step 1/9. Its function is as follows. Required for the first step of histidine biosynthesis. May allow the feedback regulation of ATP phosphoribosyltransferase activity by histidine. This chain is ATP phosphoribosyltransferase regulatory subunit, found in Paraburkholderia phymatum (strain DSM 17167 / CIP 108236 / LMG 21445 / STM815) (Burkholderia phymatum).